Consider the following 242-residue polypeptide: Platelet-derived growth factor subunit B (242 aa).

A signal peptide spans methionine 1–alanine 20. The propeptide at glutamate 21–arginine 81 is removed in mature form. Asparagine 63 carries N-linked (GlcNAc...) asparagine glycosylation. 3 cysteine pairs are disulfide-bonded: cysteine 97-cysteine 141, cysteine 130-cysteine 178, and cysteine 134-cysteine 180. Basic residues predominate over residues proline 219–aspartate 232. The disordered stretch occupies residues proline 219 to alanine 242. Positions lysine 233–alanine 242 are enriched in basic and acidic residues.

The protein belongs to the PDGF/VEGF growth factor family. As to quaternary structure, antiparallel homodimer; disulfide-linked. Antiparallel heterodimer with PDGFA; disulfide-linked. The PDGFB homodimer interacts with PDGFRA and PDGFRB homodimers, and with heterodimers formed by PDGFRA and PDGFRB. The heterodimer composed of PDGFA and PDGFB interacts with PDGFRB homodimers, and with heterodimers formed by PDGFRA and PDGFRB. Interacts with XLKD1. Interacts with LRP1. Interacts with SORL1 (via the N-terminal ectodomain). Interacts with CD82; this interaction inhibits PDGFB-mediated signaling pathway.

It is found in the secreted. Growth factor that plays an essential role in the regulation of embryonic development, cell proliferation, cell migration, survival and chemotaxis. Potent mitogen for cells of mesenchymal origin. Required for normal proliferation and recruitment of pericytes and vascular smooth muscle cells in the central nervous system, skin, lung, heart and placenta. Required for normal blood vessel development, and for normal development of kidney glomeruli. Plays an important role in wound healing. Signaling is modulated by the formation of heterodimers with PDGFA. This is Platelet-derived growth factor subunit B (PDGFB) from Canis lupus familiaris (Dog).